Reading from the N-terminus, the 296-residue chain is Putative gluconeogenesis factor (296 aa).

Belongs to the gluconeogenesis factor family.

The protein resides in the cytoplasm. Its function is as follows. Required for morphogenesis under gluconeogenic growth conditions. This Vibrio cholerae serotype O1 (strain ATCC 39315 / El Tor Inaba N16961) protein is Putative gluconeogenesis factor.